The following is a 682-amino-acid chain: 1,4-alpha-glucan-branching enzyme (682 aa).

2 residues coordinate (1,4-alpha-D-glucosyl)n: tryptophan 88 and lysine 124. Aspartate 342 acts as the Nucleophile in catalysis. Glutamate 397 functions as the Proton donor in the catalytic mechanism.

The protein belongs to the glycosyl hydrolase 13 family. GlgB subfamily.

It localises to the cytoplasm. It catalyses the reaction Transfers a segment of a (1-&gt;4)-alpha-D-glucan chain to a primary hydroxy group in a similar glucan chain.. It participates in glycan biosynthesis; glycogen biosynthesis. Functionally, glycogen-branching enzyme participates in the glycogen biosynthetic process along with glycogenin and glycogen synthase. Generates alpha-1,6-glucosidic branches from alpha-1,4-linked glucose chains, to increase solubility of the glycogen polymer. The polypeptide is 1,4-alpha-glucan-branching enzyme (Cryptococcus neoformans var. grubii serotype A (strain H99 / ATCC 208821 / CBS 10515 / FGSC 9487) (Filobasidiella neoformans var. grubii)).